A 63-amino-acid polypeptide reads, in one-letter code: Cytochrome c oxidase subunit 7C, mitochondrial (63 aa).

The transit peptide at 1–16 directs the protein to the mitochondrion; that stretch reads MLGQSIRRFTTSVVRR. The Mitochondrial matrix segment spans residues 17-33; sequence SHYEEGPGKNIPFSVEN. At lysine 25 the chain carries N6-acetyllysine; alternate. Lysine 25 carries the post-translational modification N6-succinyllysine; alternate. Residues 34–60 form a helical membrane-spanning segment; sequence KWRLLAMMTLFFGSGFAAPFFIVRHQL. Topologically, residues 61 to 63 are mitochondrial intermembrane; sequence LKK.

It belongs to the cytochrome c oxidase VIIc family. Component of the cytochrome c oxidase (complex IV, CIV), a multisubunit enzyme composed of 14 subunits. The complex is composed of a catalytic core of 3 subunits MT-CO1, MT-CO2 and MT-CO3, encoded in the mitochondrial DNA, and 11 supernumerary subunits COX4I1 (or COX4I2), COX5A, COX5B, COX6A2 (or COX6A1), COX6B1 (or COX6B2), COX6C, COX7A1 (or COX7A2), COX7B, COX7C, COX8B and NDUFA4, which are encoded in the nuclear genome. The complex exists as a monomer or a dimer and forms supercomplexes (SCs) in the inner mitochondrial membrane with NADH-ubiquinone oxidoreductase (complex I, CI) and ubiquinol-cytochrome c oxidoreductase (cytochrome b-c1 complex, complex III, CIII), resulting in different assemblies (supercomplex SCI(1)III(2)IV(1) and megacomplex MCI(2)III(2)IV(2)). Interacts with RAB5IF. In terms of tissue distribution, liver, heart, muscle and brain, contain the same isoform of COX VIIc, but at different concentrations.

The protein localises to the mitochondrion inner membrane. It functions in the pathway energy metabolism; oxidative phosphorylation. Component of the cytochrome c oxidase, the last enzyme in the mitochondrial electron transport chain which drives oxidative phosphorylation. The respiratory chain contains 3 multisubunit complexes succinate dehydrogenase (complex II, CII), ubiquinol-cytochrome c oxidoreductase (cytochrome b-c1 complex, complex III, CIII) and cytochrome c oxidase (complex IV, CIV), that cooperate to transfer electrons derived from NADH and succinate to molecular oxygen, creating an electrochemical gradient over the inner membrane that drives transmembrane transport and the ATP synthase. Cytochrome c oxidase is the component of the respiratory chain that catalyzes the reduction of oxygen to water. Electrons originating from reduced cytochrome c in the intermembrane space (IMS) are transferred via the dinuclear copper A center (CU(A)) of subunit 2 and heme A of subunit 1 to the active site in subunit 1, a binuclear center (BNC) formed by heme A3 and copper B (CU(B)). The BNC reduces molecular oxygen to 2 water molecules using 4 electrons from cytochrome c in the IMS and 4 protons from the mitochondrial matrix. In Bos taurus (Bovine), this protein is Cytochrome c oxidase subunit 7C, mitochondrial (COX7C).